The following is a 258-amino-acid chain: 5'-nucleotidase SurE (258 aa).

Residues D13, D14, S44, and N92 each contribute to the a divalent metal cation site. Residues 237–258 (SPLTAPHSTEHHDALDGIATEF) are disordered.

It belongs to the SurE nucleotidase family. The cofactor is a divalent metal cation.

The protein localises to the cytoplasm. It catalyses the reaction a ribonucleoside 5'-phosphate + H2O = a ribonucleoside + phosphate. Nucleotidase that shows phosphatase activity on nucleoside 5'-monophosphates. This is 5'-nucleotidase SurE from Halobacterium salinarum (strain ATCC 29341 / DSM 671 / R1).